A 1710-amino-acid polypeptide reads, in one-letter code: Protein NETWORKED 1B (1710 aa).

In terms of domain architecture, NAB spans 13–92 (YSWWWDSHIP…ERYDHTTVEL (80 aa)). The segment at 113 to 159 (EDSASSSSEPRTEADTEALQKDGTKSKRSFSQMNKLDGTSDSHEADS) is disordered. Basic and acidic residues-rich tracts occupy residues 122–137 (PRTE…DGTK) and 150–159 (GTSDSHEADS). Coiled coils occupy residues 152–446 (SDSH…ELGA), 474–546 (QMLR…EIHC), 579–883 (VKKL…IDSL), 974–1021 (HQCG…FESL), 1095–1259 (VSSL…LQEK), and 1285–1336 (LILE…LSAY). Positions 1409-1448 (RLSRQITRSTSQKRRDRRKIENIQPDDQVTGESRQPRLRP) are disordered. A coiled-coil region spans residues 1559–1665 (RRLSSLRISL…VLKLEDGTKS (107 aa)).

Belongs to the NET family. As to expression, expressed in root meristems and at very low levels throughout mature vasculature.

Plant-specific actin binding protein. May be part of a membrane-cytoskeletal adapter complex. In Arabidopsis thaliana (Mouse-ear cress), this protein is Protein NETWORKED 1B.